The following is a 34-amino-acid chain: Photosystem II reaction center protein M (34 aa).

Residues 5 to 25 (ILAFIATALFISIPTAFLLIP) form a helical membrane-spanning segment.

The protein belongs to the PsbM family. PSII is composed of 1 copy each of membrane proteins PsbA, PsbB, PsbC, PsbD, PsbE, PsbF, PsbH, PsbI, PsbJ, PsbK, PsbL, PsbM, PsbT, PsbX, PsbY, PsbZ, Psb30/Ycf12, at least 3 peripheral proteins of the oxygen-evolving complex and a large number of cofactors. It forms dimeric complexes.

The protein resides in the plastid. It localises to the chloroplast thylakoid membrane. Functionally, one of the components of the core complex of photosystem II (PSII). PSII is a light-driven water:plastoquinone oxidoreductase that uses light energy to abstract electrons from H(2)O, generating O(2) and a proton gradient subsequently used for ATP formation. It consists of a core antenna complex that captures photons, and an electron transfer chain that converts photonic excitation into a charge separation. This subunit is found at the monomer-monomer interface. The polypeptide is Photosystem II reaction center protein M (Psilotum nudum (Whisk fern)).